Consider the following 210-residue polypeptide: Floral homeotic protein FBP1 (210 aa).

An MADS-box domain is found at Arg-3–Phe-57. Positions His-82–Asn-173 constitute a K-box domain.

In terms of tissue distribution, petals.

It localises to the nucleus. Functionally, probable transcription factor. This chain is Floral homeotic protein FBP1 (FBP1), found in Petunia hybrida (Petunia).